The sequence spans 192 residues: Cytochrome b-245 light chain (192 aa).

At 2–7 (GQIEWA) the chain is on the cytoplasmic side. The helical transmembrane segment at 8 to 30 (MWANEQALASGLILMTGGIVATA) threads the bilayer. Residues 31 to 35 (GQFTQ) lie on the Extracellular side of the membrane. Residues 36-53 (WYLGTYSIAAGVLVCLLE) form a helical membrane-spanning segment. The Cytoplasmic segment spans residues 54–69 (YPRGRRTKGSTMERCE). The stretch at 70-80 (QKYMTKVVKAF) is an intramembrane region. The Cytoplasmic segment spans residues 81–86 (GPLSRN). The chain crosses the membrane as a helical span at residues 87–104 (YYIRAFLHLGLSVPAGFL). Residue Leu-105 is a topological domain, extracellular. Residues 106-126 (ATILGTACLAIASGIYLLAAI) form a helical membrane-spanning segment. Residues 127–192 (RGEQWTPIEP…TPCPVTDEVV (66 aa)) are Cytoplasmic-facing. The interval 134–192 (IEPKPKERPQVGGTIKQPPSNPPPRPPPEARKKPGEEAVAGVPRGAPRKTPCPVTDEVV) is disordered. Thr-147 carries the phosphothreonine modification. Residue Lys-149 forms a Glycyl lysine isopeptide (Lys-Gly) (interchain with G-Cter in ubiquitin) linkage.

This sequence belongs to the p22phox family. Component of the phagocyte NADPH oxidase core complex/cytochrome b558 complex, composed of CYBB (heavy chain (beta)) and CYBA (light chain (alpha)). Component of the phagocyte NADPH oxidase complex composed of an obligatory core heterodimer formed by the membrane proteins CYBA and CYBB and the cytosolic regulatory subunits NCF1/p47-phox, NCF2/p67-phox, NCF4/p40-phox and the small GTPase RAC1 or RAC2. Interacts with NCF1 (via SH3 domain). Interacts with SH3PXD2A. Interacts with DUOX1, DUOX2 and TPO. Interacts with NOX4; this interaction mediates superoxide generation. Interacts with calprotectin (S100A8/9). Interacts with GBP7. Interacts with NOXO1. Forms a heterodimer with NOX3 and is essential for activity and cell membrane localization of NOX3. Interacts with NOX1. Phosphorylation at Thr-147 enhances NADPH oxidase activity by promoting NCF1/p47-phox binding. Post-translationally, ubiquitinated at Lys-149 likely by RNF145.

Its subcellular location is the cell membrane. Its function is as follows. Subunit of NADPH oxidase complexes that is required for the NADPH oxidase activity that generates, in various cell types, superoxide from molecular oxygen utilizing NADPH as an electron donor. Subunit of the phagocyte NADPH oxidase complex that mediates the transfer of electrons from cytosolic NADPH to O2 to produce the superoxide anion (O2(-)). In the activated complex, electrons are first transferred from NADPH to flavin adenine dinucleotide (FAD) and subsequently transferred via two heme molecules to molecular oxygen, producing superoxide through an outer-sphere reaction. Activation of the NADPH oxidase complex is initiated by the assembly of cytosolic subunits of the NADPH oxidase complex with the core NADPH oxidase complex to form a complex at the plasma membrane or phagosomal membrane. This activation process is initiated by phosphorylation dependent binding of the cytosolic NCF1/p47-phox subunit to the C-terminus of CYBA/p22-phox. Aassociates with NOX3 to form a functional NADPH oxidase constitutively generating superoxide. The sequence is that of Cytochrome b-245 light chain from Sus scrofa (Pig).